The following is a 136-amino-acid chain: Putative nickel-responsive regulator (136 aa).

His76, His87, His89, and Cys95 together coordinate Ni(2+).

The protein belongs to the transcriptional regulatory CopG/NikR family. Ni(2+) is required as a cofactor.

In terms of biological role, transcriptional regulator. This Desulfotalea psychrophila (strain LSv54 / DSM 12343) protein is Putative nickel-responsive regulator.